Here is a 258-residue protein sequence, read N- to C-terminus: Bidirectional sugar transporter SWEET7 (258 aa).

Residues 1–11 lie on the Extracellular side of the membrane; it reads MVFAHLNLLRK. A helical transmembrane segment spans residues 12 to 32; that stretch reads IVGIIGNFIALCLFLSPTPTF. One can recognise a MtN3/slv 1 domain in the interval 12-100; that stretch reads IVGIIGNFIA…IFFVYCGRQK (89 aa). The Cytoplasmic portion of the chain corresponds to 33–46; the sequence is VRIVKKKSVEEYSP. Residues 47 to 67 form a helical membrane-spanning segment; the sequence is IPYLATLINCLVWVLYGLPTV. The Extracellular portion of the chain corresponds to 68 to 73; that stretch reads HPDSTL. A helical transmembrane segment spans residues 74 to 94; it reads VITINGTGILIEIVFLTIFFV. Over 95-102 the chain is Cytoplasmic; that stretch reads YCGRQKQR. The chain crosses the membrane as a helical span at residues 103-123; it reads LIISAVIAAETAFIAILAVLV. The Extracellular portion of the chain corresponds to 124-134; that stretch reads LTLQHTTEKRT. The chain crosses the membrane as a helical span at residues 135–155; the sequence is MSVGIVCCVFNVMMYASPLSV. The MtN3/slv 2 domain occupies 136–221; that stretch reads SVGIVCCVFN…LYGAYYKSTK (86 aa). Topologically, residues 156 to 166 are cytoplasmic; sequence MKMVIKTKSVE. A helical transmembrane segment spans residues 167 to 187; that stretch reads FMPFWLSVAGFLNAGVWTIYA. At 188 to 193 the chain is on the extracellular side; that stretch reads LMPFDP. The helical transmembrane segment at 194-214 threads the bilayer; the sequence is FMAIPNGIGCLFGLAQLILYG. At 215–258 the chain is on the cytoplasmic side; it reads AYYKSTKRIMAERENQPGYVGLSSAIARTGSEKTANTNQEPNNV.

This sequence belongs to the SWEET sugar transporter family. As to quaternary structure, forms heterooligomers with SWEET8, SWEET11, SWEET13, SWEET16 and SWEET17.

It is found in the cell membrane. Mediates both low-affinity uptake and efflux of sugar across the plasma membrane. In Arabidopsis thaliana (Mouse-ear cress), this protein is Bidirectional sugar transporter SWEET7.